We begin with the raw amino-acid sequence, 1227 residues long: RNA-binding protein 20 (1227 aa).

Disordered stretches follow at residues Met1–Leu58 and Gly289–Gly374. Residues Pro27–Gln42 are compositionally biased toward low complexity. Residues Gln43 to Ala56 are compositionally biased toward pro residues. The segment covering Gln313–Pro331 has biased composition (polar residues). A U1-type zinc finger spans residues His409–Phe443. Phosphoserine is present on Ser498. The RRM domain occupies Arg518 to Arg593. The span at Glu624 to Arg634 shows a compositional bias: basic and acidic residues. Disordered stretches follow at residues Glu624–Glu906 and Ser977–Pro1089. The RS stretch occupies residues Tyr628–Cys655. Phosphoserine is present on residues Ser635, Ser637, Ser640, Ser642, Ser660, and Ser679. A compositionally biased stretch (low complexity) spans Arg636–Ser660. Composition is skewed to basic and acidic residues over residues Asp674–His709 and Arg716–Pro738. Residues Gly741–Tyr752 show a composition bias toward polar residues. The residue at position 742 (Ser742) is a Phosphoserine. Composition is skewed to basic and acidic residues over residues Lys753 to Leu772, Arg784 to Leu807, and Glu816 to Gln856. Position 801 is a phosphoserine (Ser801). A phosphoserine mark is found at Ser865, Ser876, Ser891, Ser893, Ser977, Ser980, and Ser1013. Positions Arg868–Asp888 are enriched in basic and acidic residues. The segment covering Cys1024–Asp1036 has biased composition (basic and acidic residues). 5 positions are modified to phosphoserine: Ser1048, Ser1060, Ser1080, Ser1115, and Ser1120. The Matrin-type zinc-finger motif lies at Phe1161 to Lys1192. Basic and acidic residues predominate over residues Gly1201–Asp1215. The segment at Gly1201 to Leu1227 is disordered. Ser1210 carries the post-translational modification Phosphoserine.

Associates with components of the U1 and U2 U1 small nuclear ribonucleoprotein complexes. Phosphorylation regulates the subcellular localization. Phosphorylation of Ser-635 and Ser-637 in the RS (arginine/serine-rich) region promotes nuclear localization of the protein. In contrast, phosphorylation of the C-terminal disordered region promotes localization to cytoplasmic ribonucleoprotein granules. In terms of tissue distribution, mainly expressed in the heart. Also expressed in skeletal muscle tissues, ovary, small intestine and colon.

It is found in the nucleus. The protein resides in the cytoplasm. The protein localises to the cytoplasmic ribonucleoprotein granule. In terms of biological role, RNA-binding protein that acts as a regulator of mRNA splicing of a subset of genes encoding key structural proteins involved in cardiac development, such as TTN (Titin), CACNA1C, CAMK2D or PDLIM5/ENH. Acts as a repressor of mRNA splicing: specifically binds the 5'UCUU-3' motif that is predominantly found within intronic sequences of pre-mRNAs, leading to the exclusion of specific exons in target transcripts. RBM20-mediated exon skipping is hormone-dependent and is essential for TTN isoform transition in both cardiac and skeletal muscles. RBM20-mediated exon skipping of TTN provides substrates for the formation of circular RNA (circRNAs) from the TTN transcripts. Together with RBM24, promotes the expression of short isoforms of PDLIM5/ENH in cardiomyocytes. This chain is RNA-binding protein 20, found in Homo sapiens (Human).